The chain runs to 373 residues: Probable tRNA sulfurtransferase (373 aa).

Positions Asn54 to Ile158 constitute a THUMP domain. ATP-binding positions include Leu176–Phe177, Asn201–Phe202, Lys256, Gly278, and Gln287.

It belongs to the ThiI family.

The protein localises to the cytoplasm. The catalysed reaction is [ThiI sulfur-carrier protein]-S-sulfanyl-L-cysteine + a uridine in tRNA + 2 reduced [2Fe-2S]-[ferredoxin] + ATP + H(+) = [ThiI sulfur-carrier protein]-L-cysteine + a 4-thiouridine in tRNA + 2 oxidized [2Fe-2S]-[ferredoxin] + AMP + diphosphate. The enzyme catalyses [ThiS sulfur-carrier protein]-C-terminal Gly-Gly-AMP + S-sulfanyl-L-cysteinyl-[cysteine desulfurase] + AH2 = [ThiS sulfur-carrier protein]-C-terminal-Gly-aminoethanethioate + L-cysteinyl-[cysteine desulfurase] + A + AMP + 2 H(+). It participates in cofactor biosynthesis; thiamine diphosphate biosynthesis. In terms of biological role, catalyzes the ATP-dependent transfer of a sulfur to tRNA to produce 4-thiouridine in position 8 of tRNAs, which functions as a near-UV photosensor. Also catalyzes the transfer of sulfur to the sulfur carrier protein ThiS, forming ThiS-thiocarboxylate. This is a step in the synthesis of thiazole, in the thiamine biosynthesis pathway. The sulfur is donated as persulfide by IscS. The sequence is that of Probable tRNA sulfurtransferase from Saccharolobus islandicus (strain M.14.25 / Kamchatka #1) (Sulfolobus islandicus).